Reading from the N-terminus, the 302-residue chain is MTRHGKNCTAGAVYTYHEKKKDTAASGYGTQNIRLSRDAVKDFDCCCLSLQPCHDPVVTPDGYLYEREAILEYILHQKKEIARQMKAYEKQRGARREEQKELQRAAAQDHVRGFLEKEAAIVSRPLNPFTPKAASAGNGPDDAQPGSSAGPAGKDKDKALPSFWIPSLTPEAKATKLEKPSRIVTCPMSGKPLRMSDLTPVRFTPLDSSVDRVGLITRSERYVCAVTRDSLSNATPCAVLRPSGAVVTLECVEKLIRKDMVDPVTGEKLTDRDIIVLQRGGTGFAGSGVKLQAEKSRPVMQA.

Phosphoserine is present on Ser-36. Positions 55-75 (DPVVTPDGYLYEREAILEYIL) are U-box-like. The Nuclear localization signal signature appears at 78 to 101 (KKEIARQMKAYEKQRGARREEQKE). The segment at 126 to 156 (LNPFTPKAASAGNGPDDAQPGSSAGPAGKDK) is disordered.

The protein belongs to the NOSIP family. Interacts with NOS1 and NOS3. Interacts with PP2A holoenzyme, containing PPP2CA, PPP2CB, PPP2R1A and PPP2R2A subunits.

It is found in the cytoplasm. Its subcellular location is the nucleus. It catalyses the reaction S-ubiquitinyl-[E2 ubiquitin-conjugating enzyme]-L-cysteine + [acceptor protein]-L-lysine = [E2 ubiquitin-conjugating enzyme]-L-cysteine + N(6)-ubiquitinyl-[acceptor protein]-L-lysine.. Its function is as follows. E3 ubiquitin-protein ligase that is essential for proper development of the forebrain, the eye, and the face. Catalyzes monoubiquitination of serine/threonine-protein phosphatase 2A (PP2A) catalytic subunit PPP2CA/PPP2CB. Negatively regulates nitric oxide production by inducing NOS1 and NOS3 translocation to actin cytoskeleton and inhibiting their enzymatic activity. The chain is Nitric oxide synthase-interacting protein (NOSIP) from Bos taurus (Bovine).